The primary structure comprises 293 residues: Acetyl-coenzyme A carboxylase carboxyl transferase subunit beta (293 aa).

One can recognise a CoA carboxyltransferase N-terminal domain in the interval 29–293 (LWSKCPECGL…GSKSLELTNA (265 aa)). Zn(2+) is bound by residues Cys33, Cys36, Cys52, and Cys55. The segment at 33 to 55 (CPECGLVVYLKDLRLNASVCAGC) adopts a C4-type zinc-finger fold.

It belongs to the AccD/PCCB family. Acetyl-CoA carboxylase is a heterohexamer composed of biotin carboxyl carrier protein (AccB), biotin carboxylase (AccC) and two subunits each of ACCase subunit alpha (AccA) and ACCase subunit beta (AccD). Requires Zn(2+) as cofactor.

The protein resides in the cytoplasm. It catalyses the reaction N(6)-carboxybiotinyl-L-lysyl-[protein] + acetyl-CoA = N(6)-biotinyl-L-lysyl-[protein] + malonyl-CoA. Its pathway is lipid metabolism; malonyl-CoA biosynthesis; malonyl-CoA from acetyl-CoA: step 1/1. Functionally, component of the acetyl coenzyme A carboxylase (ACC) complex. Biotin carboxylase (BC) catalyzes the carboxylation of biotin on its carrier protein (BCCP) and then the CO(2) group is transferred by the transcarboxylase to acetyl-CoA to form malonyl-CoA. This Synechococcus sp. (strain CC9902) protein is Acetyl-coenzyme A carboxylase carboxyl transferase subunit beta.